The primary structure comprises 96 residues: Large ribosomal subunit protein bL21 (96 aa).

This sequence belongs to the bacterial ribosomal protein bL21 family. In terms of assembly, part of the 50S ribosomal subunit. Contacts protein L20.

Its function is as follows. This protein binds to 23S rRNA in the presence of protein L20. The chain is Large ribosomal subunit protein bL21 from Sulfurihydrogenibium sp. (strain YO3AOP1).